A 553-amino-acid chain; its full sequence is Aminotransferase FUM8 (553 aa).

The first 25 residues, 1–25 (MSPAPAILALRRVYNFCLLVDEAHG), serve as a signal peptide directing secretion. The N-linked (GlcNAc...) asparagine glycan is linked to Asn-480.

This sequence belongs to the class-II pyridoxal-phosphate-dependent aminotransferase family. BioF subfamily. It depends on pyridoxal 5'-phosphate as a cofactor.

Its subcellular location is the endoplasmic reticulum. It participates in mycotoxin biosynthesis. Its function is as follows. Aminotransferase; part of the gene cluster that mediates the biosynthesis of fumonisins B1 (FB1), B2 (FB2), B3 (FB3), and B4 (FB4), which are carcinogenic mycotoxins. Within the pathway, FUM8 catalyzes the release of the C-18 polyketide chain from the highly reducing polyketide synthase FUM1 by a nucleophilic attack of a carbanion, which is derived from R-carbon of alanine by decarboxylation, on the carbonyl carbon of polyketide acyl chain. The biosynthesis starts with the FUM1-catalyzed carbon chain assembly from one molecule of acetyl-CoA, eight molecules of malonyl-CoA, and two molecules of methionine (in S-adenosyl form). The C18 polyketide chain is released from the enzyme by a nucleophilic attack of a carbanion, which is derived from R-carbon of alanine by decarboxylation, on the carbonyl carbon of polyketide acyl chain. This step is catalyzed by the pyridoxal 5'-phosphate-dependent aminoacyl transferase FUM8. The resultant 3-keto intermediate is then stereospecifically reduced to a 3-hydroxyl product by reductase FUM13. Subsequent oxidations at C-10 by the cytochrome P450 monooxygenase FUM2, C-14 and C-15 by FUM6, FUM12 or FUM15, tricarballylic esterification of the hydroxyl groups on C-14 and C-15 by acyltransferase FUM14, and C-5 hydroxylation by 2-keto-glutarate-dependent dioxygenase FUM3 furnish the biosynthesis of fumonisins. The tricarballylic moieties are most likely derived from the citric acid cycle, and their addition to the carbon backbone may involve FUM7, FUM10, FUM11 and FUM14. The chain is Aminotransferase FUM8 from Gibberella moniliformis (strain M3125 / FGSC 7600) (Maize ear and stalk rot fungus).